We begin with the raw amino-acid sequence, 958 residues long: Translation initiation factor IF-2 (958 aa).

Residues 50–67 are compositionally biased toward low complexity; that stretch reads FKPAAAPKVEAKPAAPKV. Disordered regions lie at residues 50–224 and 288–374; these read FKPA…RIDF and EVVP…HELP. 3 stretches are compositionally biased toward basic and acidic residues: residues 68–89, 96–118, and 138–153; these read SAEK…EEAK, SAEK…EAKP, and FKAE…AERR. Over residues 157 to 169 the composition is skewed to low complexity; that stretch reads KGNNRDQQQNGNR. 2 stretches are compositionally biased toward basic and acidic residues: residues 185-195 and 290-323; these read RDNRRFNDQAK and VPEK…DGPR. Residues 337–346 show a composition bias toward low complexity; that stretch reads NQKNSNWNNN. The segment covering 365–374 has biased composition (basic and acidic residues); the sequence is VTERKFHELP. Positions 460–627 constitute a tr-type G domain; sequence ERPPVVTIMG…TVLLVAEIQE (168 aa). The tract at residues 469-476 is G1; the sequence is GHVDHGKT. A GTP-binding site is contributed by 469 to 476; that stretch reads GHVDHGKT. Positions 494–498 are G2; it reads GITQH. Residues 515 to 518 are G3; sequence DTPG. Residues 515 to 519 and 569 to 572 each bind GTP; these read DTPGH and NKID. The segment at 569-572 is G4; it reads NKID. The tract at residues 605–607 is G5; sequence SAK.

This sequence belongs to the TRAFAC class translation factor GTPase superfamily. Classic translation factor GTPase family. IF-2 subfamily.

The protein resides in the cytoplasm. In terms of biological role, one of the essential components for the initiation of protein synthesis. Protects formylmethionyl-tRNA from spontaneous hydrolysis and promotes its binding to the 30S ribosomal subunits. Also involved in the hydrolysis of GTP during the formation of the 70S ribosomal complex. This chain is Translation initiation factor IF-2, found in Streptococcus pneumoniae serotype 4 (strain ATCC BAA-334 / TIGR4).